Here is a 298-residue protein sequence, read N- to C-terminus: 4-diphosphocytidyl-2-C-methyl-D-erythritol kinase (298 aa).

Lysine 25 is a catalytic residue. Residue 109–119 coordinates ATP; it reads PVGGGFGGGSS. Residue aspartate 151 is part of the active site.

Belongs to the GHMP kinase family. IspE subfamily.

The enzyme catalyses 4-CDP-2-C-methyl-D-erythritol + ATP = 4-CDP-2-C-methyl-D-erythritol 2-phosphate + ADP + H(+). It participates in isoprenoid biosynthesis; isopentenyl diphosphate biosynthesis via DXP pathway; isopentenyl diphosphate from 1-deoxy-D-xylulose 5-phosphate: step 3/6. Its function is as follows. Catalyzes the phosphorylation of the position 2 hydroxy group of 4-diphosphocytidyl-2C-methyl-D-erythritol. The sequence is that of 4-diphosphocytidyl-2-C-methyl-D-erythritol kinase from Xylella fastidiosa (strain 9a5c).